Here is a 451-residue protein sequence, read N- to C-terminus: Gamma-aminobutyric acid receptor subunit alpha-2 (451 aa).

The signal sequence occupies residues 1–28; the sequence is MRTKLSTCNVWFPLLVLLVWNPARLVLA. Residues 29 to 249 lie on the Extracellular side of the membrane; sequence NIQEDEAKNN…MTAHFHLKRK (221 aa). Residue Asn-38 is glycosylated (N-linked (GlcNAc...) asparagine). Arg-94 is a binding site for 4-aminobutanoate. Residues Asn-114 and Asn-138 are each glycosylated (N-linked (GlcNAc...) asparagine). Position 157 (Thr-157) interacts with 4-aminobutanoate. Residues Cys-166 and Cys-180 are joined by a disulfide bond. Transmembrane regions (helical) follow at residues 250-270, 281-300, and 312-332; these read IGYF…LSQV, ARTV…SISA, and AMDW…IEFA. At 333-420 the chain is on the cytoplasmic side; that stretch reads TVNYFTKRGW…FNSVSKIDRM (88 aa). The interval 389 to 408 is disordered; the sequence is KSATTPEPNKKPENKPAEAK. Residues 396–408 show a composition bias toward basic and acidic residues; that stretch reads PNKKPENKPAEAK. The helical transmembrane segment at 421–441 threads the bilayer; sequence SRIVFPVLFGTFNLVYWATYL. Topologically, residues 442–451 are extracellular; that stretch reads NREPVLGVSP.

The protein belongs to the ligand-gated ion channel (TC 1.A.9) family. Gamma-aminobutyric acid receptor (TC 1.A.9.5) subfamily. GABRA2 sub-subfamily. As to quaternary structure, heteropentamer, formed by a combination of alpha (GABRA1-6), beta (GABRB1-3), gamma (GABRG1-3), delta (GABRD), epsilon (GABRE), rho (GABRR1-3), pi (GABRP) and theta (GABRQ) subunits, each subunit exhibiting distinct physiological and pharmacological properties. Binds UBQLN1. Interacts with KIF21B. Interacts with LHFPL4. Interacts with SHISA7; interaction leads to the regulation of GABA(A) receptor trafficking, channel deactivation kinetics and pharmacology. Post-translationally, glycosylated. Expressed in brain (at protein level).

It is found in the postsynaptic cell membrane. It localises to the cell membrane. Its subcellular location is the cytoplasmic vesicle membrane. The protein localises to the cell projection. The protein resides in the dendrite. The enzyme catalyses chloride(in) = chloride(out). With respect to regulation, activated by pentobarbital. Inhibited by the antagonist bicuculline. Its function is as follows. Alpha subunit of the heteropentameric ligand-gated chloride channel gated by gamma-aminobutyric acid (GABA), a major inhibitory neurotransmitter in the brain. GABA-gated chloride channels, also named GABA(A) receptors (GABAAR), consist of five subunits arranged around a central pore and contain GABA active binding site(s) located at the alpha and beta subunit interface(s). When activated by GABA, GABAARs selectively allow the flow of chloride anions across the cell membrane down their electrochemical gradient. Chloride influx into the postsynaptic neuron following GABAAR opening decreases the neuron ability to generate a new action potential, thereby reducing nerve transmission. The alpha-2 subunit exhibits synaptogenic activity together with beta-2 and very little to no activity together with beta-3, the gamma-2 subunit being necessary but not sufficient to induce rapid synaptic contacts formation. The chain is Gamma-aminobutyric acid receptor subunit alpha-2 from Rattus norvegicus (Rat).